A 359-amino-acid polypeptide reads, in one-letter code: Phospho-N-acetylmuramoyl-pentapeptide-transferase (359 aa).

The Periplasmic portion of the chain corresponds to 1-25 (MLYQLALLLKDYWFAFNVLKYITFR). A helical membrane pass occupies residues 26 to 48 (SFTAVLIAFFLTLVLSPSFINRL). Residues 49-74 (RKIQRLFGGYVREYTPESHEVKKYTP) lie on the Cytoplasmic side of the membrane. 2 residues coordinate muraymycin D2: Lys70 and Thr75. Residues 75 to 92 (TMGGIVILIVVTLSTLLL) traverse the membrane as a helical segment. At 93 to 98 (MRWDIK) the chain is on the periplasmic side. A helical transmembrane segment spans residues 99-120 (YTWVVLLSFLSFGTIGFWDDYV). At 121–130 (KLKNKKGISI) the chain is on the cytoplasmic side. The helical transmembrane segment at 131-152 (KTKFLLQVLSASLISVLIYYWA) threads the bilayer. At 153–172 (DIDTILYFPFFKELYVDLGV) the chain is on the periplasmic side. The chain crosses the membrane as a helical span at residues 173-194 (LYLPFAVFVIVGSANAVNLTDG). Asn190, Asp193, and Asp196 together coordinate muraymycin D2. The Cytoplasmic segment spans residues 195–197 (LDG). Residues 198–218 (LAIGPAMTTATALGVVAYAVG) traverse the membrane as a helical segment. Topologically, residues 219–233 (HSKIAQYLNIPYVPY) are periplasmic. A helical transmembrane segment spans residues 234–255 (AGELTVFCFALVGAGLGFLWFN). Topologically, residues 256–264 (SFPAQMFMG) are cytoplasmic. 2 residues coordinate muraymycin D2: Gly264 and Ser268. Residues 265 to 280 (DVGSLSIGASLATVAL) traverse the membrane as a helical segment. Over 281 to 284 (LTKS) the chain is Periplasmic. The chain crosses the membrane as a helical span at residues 285 to 310 (EFIFAVAAGVFVFETISVILQIIYFR). Positions 305 and 321 each coordinate muraymycin D2. Topologically, residues 311–332 (WTGGKRLFKRAPFHHHLELNGL) are cytoplasmic. Residues 333–355 (PEPKIVVRMWIISILLAIIAISM) traverse the membrane as a helical segment. Topologically, residues 356–359 (LKLR) are periplasmic.

The protein belongs to the glycosyltransferase 4 family. MraY subfamily. Homodimer. Mg(2+) serves as cofactor. Mn(2+) is required as a cofactor.

It is found in the cell inner membrane. It catalyses the reaction UDP-N-acetyl-alpha-D-muramoyl-L-alanyl-gamma-D-glutamyl-meso-2,6-diaminopimeloyl-D-alanyl-D-alanine + di-trans,octa-cis-undecaprenyl phosphate = di-trans,octa-cis-undecaprenyl diphospho-N-acetyl-alpha-D-muramoyl-L-alanyl-D-glutamyl-meso-2,6-diaminopimeloyl-D-alanyl-D-alanine + UMP. It participates in cell wall biogenesis; peptidoglycan biosynthesis. With respect to regulation, inhibited by natural nucleoside antibiotics including tunicamycin, capuramycin and muraymycin. Usually the cofactor magnesium is not required for antibiotic binding. In terms of biological role, catalyzes the initial step of the lipid cycle reactions in the biosynthesis of the cell wall peptidoglycan: transfers peptidoglycan precursor phospho-MurNAc-pentapeptide from UDP-MurNAc-pentapeptide onto the lipid carrier undecaprenyl phosphate, yielding undecaprenyl-pyrophosphoryl-MurNAc-pentapeptide, known as lipid I. The chain is Phospho-N-acetylmuramoyl-pentapeptide-transferase from Aquifex aeolicus (strain VF5).